We begin with the raw amino-acid sequence, 423 residues long: Diaminobutyrate--2-oxoglutarate transaminase (423 aa).

N6-(pyridoxal phosphate)lysine is present on K271.

The protein belongs to the class-III pyridoxal-phosphate-dependent aminotransferase family. It depends on pyridoxal 5'-phosphate as a cofactor.

It catalyses the reaction L-2,4-diaminobutanoate + 2-oxoglutarate = L-aspartate 4-semialdehyde + L-glutamate. Its pathway is amine and polyamine biosynthesis; ectoine biosynthesis; L-ectoine from L-aspartate 4-semialdehyde: step 1/3. In terms of biological role, catalyzes reversively the conversion of L-aspartate beta-semialdehyde (ASA) to L-2,4-diaminobutyrate (DABA) by transamination with L-glutamate. This is Diaminobutyrate--2-oxoglutarate transaminase (ectB) from Streptomyces avermitilis (strain ATCC 31267 / DSM 46492 / JCM 5070 / NBRC 14893 / NCIMB 12804 / NRRL 8165 / MA-4680).